The following is a 301-amino-acid chain: Probable 5-dehydro-4-deoxyglucarate dehydratase (301 aa).

Belongs to the DapA family.

It carries out the reaction 5-dehydro-4-deoxy-D-glucarate + H(+) = 2,5-dioxopentanoate + CO2 + H2O. It functions in the pathway carbohydrate acid metabolism; D-glucarate degradation; 2,5-dioxopentanoate from D-glucarate: step 2/2. This chain is Probable 5-dehydro-4-deoxyglucarate dehydratase, found in Rhizobium meliloti (strain 1021) (Ensifer meliloti).